The primary structure comprises 368 residues: Nuclease EXOG, mitochondrial (368 aa).

Residues 1–41 constitute a mitochondrion transit peptide; sequence MAIKSIASRLRGSRRFLSGFVAGAVVGAAGAGLAALQFFRS. Catalysis depends on H140, which acts as the Proton acceptor. N171 contacts a divalent metal cation.

Belongs to the DNA/RNA non-specific endonuclease family. As to quaternary structure, homodimer. It depends on a divalent metal cation as a cofactor. In terms of tissue distribution, ubiquitous.

The protein localises to the mitochondrion inner membrane. Its function is as follows. Endo/exonuclease with nicking activity towards supercoiled DNA, a preference for single-stranded DNA and 5'-3' exonuclease activity. The sequence is that of Nuclease EXOG, mitochondrial (EXOG) from Homo sapiens (Human).